Here is a 156-residue protein sequence, read N- to C-terminus: Movement protein P17 (156 aa).

The segment at 38 to 54 is homodimerization; that stretch reads AEDAEEEAIAAQEELEF. Disordered regions lie at residues 55 to 80 and 106 to 156; these read PEDE…EVSP and ASYF…IKRG. Residues 57–156 are RNA-binding; sequence DEAQARHSCL…RAAPKLIKRG (100 aa). Phosphoserine is present on residues Ser71, Ser79, Ser137, and Ser140. Residues 144–156 are compositionally biased toward basic residues; sequence KLRRAAPKLIKRG.

It belongs to the polerovirus movement protein family. As to quaternary structure, homodimer. Post-translationally, expressed as a nonphosphorylated 20kDa form and a phosphorylated 22kDa form. Phosphorylated by a host PKC-related kinase. Serine phosphorylation is required for plamodesma targeting.

The protein localises to the host cell junction. Its subcellular location is the host plasmodesma. The protein resides in the host chloroplast envelope. It localises to the host Golgi apparatus. It is found in the host mitochondrion outer membrane. In terms of biological role, together with movement protein P3a, facilitates long-distance movement of virions in host. Transports viral genome to neighboring plant cells directly through plasmosdesmata, without any budding. The movement protein allows efficient cell to cell propagation, by bypassing the host cell wall barrier. Binds ssRNA. In Potato leafroll virus (strain Potato/Canada/Rowhani/1979) (PLrV), this protein is Movement protein P17.